We begin with the raw amino-acid sequence, 556 residues long: Genetic interactor of prohibitins 3, mitochondrial (556 aa).

The transit peptide at 1-21 (MLNLCHALRGVRQFSCSVIVK) directs the protein to the mitochondrion. Positions 113-305 (ESTLNDILNY…LFDLPGYSTS (193 aa)) constitute a CP-type G domain.

This sequence belongs to the TRAFAC class YlqF/YawG GTPase family. GEP3 subfamily.

The protein resides in the mitochondrion. In terms of biological role, interacts genetically with prohibitins and thus may be involved in the mitochondrial lipid metabolism. This Saccharomyces cerevisiae (strain YJM789) (Baker's yeast) protein is Genetic interactor of prohibitins 3, mitochondrial (GEP3).